The primary structure comprises 253 residues: 5'-nucleotidase SurE (253 aa).

Aspartate 8, aspartate 9, serine 40, and asparagine 93 together coordinate a divalent metal cation.

The protein belongs to the SurE nucleotidase family. Requires a divalent metal cation as cofactor.

It is found in the cytoplasm. The enzyme catalyses a ribonucleoside 5'-phosphate + H2O = a ribonucleoside + phosphate. Its function is as follows. Nucleotidase that shows phosphatase activity on nucleoside 5'-monophosphates. This is 5'-nucleotidase SurE from Methylobacterium nodulans (strain LMG 21967 / CNCM I-2342 / ORS 2060).